A 479-amino-acid polypeptide reads, in one-letter code: Serine carboxypeptidase-like 29 (479 aa).

Residues 1–28 (MAKTRGSCCLVNALIAIAFLATAHLCEA) form the signal peptide. N47 and N144 each carry an N-linked (GlcNAc...) asparagine glycan. 3 cysteine pairs are disulfide-bonded: C93–C349, C254–C266, and C290–C317. The active site involves S186. N293 carries an N-linked (GlcNAc...) asparagine glycan. Active-site residues include D386 and H438.

Belongs to the peptidase S10 family. As to expression, expressed in seedlings, roots, leaves and flowers.

The protein resides in the secreted. Functionally, probable carboxypeptidase. The sequence is that of Serine carboxypeptidase-like 29 (SCPL29) from Arabidopsis thaliana (Mouse-ear cress).